A 436-amino-acid polypeptide reads, in one-letter code: Na(+)/H(+) antiporter NhaA 1 (436 aa).

The next 11 helical transmembrane spans lie at 35–55, 80–100, 116–136, 147–167, 176–196, 201–221, 226–246, 283–303, 313–333, 354–374, and 385–405; these read FGGG…NSPW, LATW…GLEL, ALPV…YVGV, GWAI…AVIG, AFLL…IAIF, FKLT…LLVQ, WWWA…ESGV, VSAG…SLRG, PIVV…IFGS, LLGV…IGEL, and VKAA…IVLI.

It belongs to the NhaA Na(+)/H(+) (TC 2.A.33) antiporter family.

It is found in the cell membrane. It carries out the reaction Na(+)(in) + 2 H(+)(out) = Na(+)(out) + 2 H(+)(in). In terms of biological role, na(+)/H(+) antiporter that extrudes sodium in exchange for external protons. In Salinispora tropica (strain ATCC BAA-916 / DSM 44818 / JCM 13857 / NBRC 105044 / CNB-440), this protein is Na(+)/H(+) antiporter NhaA 1.